Here is a 414-residue protein sequence, read N- to C-terminus: Gamma-glutamyl phosphate reductase (414 aa).

It belongs to the gamma-glutamyl phosphate reductase family.

It localises to the cytoplasm. It catalyses the reaction L-glutamate 5-semialdehyde + phosphate + NADP(+) = L-glutamyl 5-phosphate + NADPH + H(+). The protein operates within amino-acid biosynthesis; L-proline biosynthesis; L-glutamate 5-semialdehyde from L-glutamate: step 2/2. Functionally, catalyzes the NADPH-dependent reduction of L-glutamate 5-phosphate into L-glutamate 5-semialdehyde and phosphate. The product spontaneously undergoes cyclization to form 1-pyrroline-5-carboxylate. The chain is Gamma-glutamyl phosphate reductase from Thermoanaerobacter pseudethanolicus (strain ATCC 33223 / 39E) (Clostridium thermohydrosulfuricum).